The chain runs to 261 residues: uncharacterized protein (261 aa).

This is an uncharacterized protein from Enterobacteriaceae (Bacteriophage P2).